The following is a 39-amino-acid chain: Photosystem II reaction center protein J (39 aa).

Residues 9–29 form a helical membrane-spanning segment; the sequence is LWLVVTFGGIVVLTVLGIFIY.

It belongs to the PsbJ family. PSII is composed of 1 copy each of membrane proteins PsbA, PsbB, PsbC, PsbD, PsbE, PsbF, PsbH, PsbI, PsbJ, PsbK, PsbL, PsbM, PsbT, PsbY, PsbZ, Psb30/Ycf12, at least 3 peripheral proteins of the oxygen-evolving complex and a large number of cofactors. It forms dimeric complexes.

The protein localises to the plastid. The protein resides in the chloroplast thylakoid membrane. One of the components of the core complex of photosystem II (PSII). PSII is a light-driven water:plastoquinone oxidoreductase that uses light energy to abstract electrons from H(2)O, generating O(2) and a proton gradient subsequently used for ATP formation. It consists of a core antenna complex that captures photons, and an electron transfer chain that converts photonic excitation into a charge separation. The polypeptide is Photosystem II reaction center protein J (Cyanidium caldarium (Red alga)).